We begin with the raw amino-acid sequence, 107 residues long: Insulin (107 aa).

A signal peptide spans 1 to 24 (MALWIRSLPLLALLVFSGPGTSYA). 3 disulfide bridges follow: C31–C93, C43–C106, and C92–C97. Residues 57-84 (DVEQPLVSSPLRGEAGVLPFQQEEYEKV) constitute a propeptide, c peptide.

This sequence belongs to the insulin family. In terms of assembly, heterodimer of a B chain and an A chain linked by two disulfide bonds.

It is found in the secreted. Insulin decreases blood glucose concentration. It increases cell permeability to monosaccharides, amino acids and fatty acids. It accelerates glycolysis, the pentose phosphate cycle, and glycogen synthesis in liver. The protein is Insulin (INS) of Gallus gallus (Chicken).